We begin with the raw amino-acid sequence, 25 residues long: Small ribosomal subunit protein eS32 eS32z/eS32y/eS32x/eS32w/eS32v (25 aa).

Residues 1–25 (MRAKWKKKRMRRLKRKRRKMRQRSK) form a disordered region.

Belongs to the eukaryotic ribosomal protein eS32 family. Component of the small ribosomal subunit (SSU).

The chain is Small ribosomal subunit protein eS32 eS32z/eS32y/eS32x/eS32w/eS32v (RPL41A) from Arabidopsis thaliana (Mouse-ear cress).